The primary structure comprises 448 residues: Amino-acid acetyltransferase (448 aa).

Residues 295–433 (EQIRRANIND…KQVLYNYQRR (139 aa)) form the N-acetyltransferase domain.

The protein belongs to the acetyltransferase family. ArgA subfamily. In terms of assembly, homohexamer.

It is found in the cytoplasm. The catalysed reaction is L-glutamate + acetyl-CoA = N-acetyl-L-glutamate + CoA + H(+). It participates in amino-acid biosynthesis; L-arginine biosynthesis; N(2)-acetyl-L-ornithine from L-glutamate: step 1/4. This is Amino-acid acetyltransferase from Photorhabdus laumondii subsp. laumondii (strain DSM 15139 / CIP 105565 / TT01) (Photorhabdus luminescens subsp. laumondii).